Here is a 523-residue protein sequence, read N- to C-terminus: 3-hydroxybenzoate--CoA ligase (523 aa).

It belongs to the ATP-dependent AMP-binding enzyme family. Benzoate-CoA ligase subfamily.

The catalysed reaction is 3-hydroxybenzoate + ATP + CoA = 3-hydroxybenzoyl-CoA + AMP + diphosphate. The enzyme catalyses 4-hydroxybenzoate + ATP + CoA = 4-hydroxybenzoyl-CoA + AMP + diphosphate. Ligase involved in the anaerobic degradation of 3-hydroxybenzoate (3OHBz). Catalyzes the activation of 3-hydroxybenzoate to 3-hydroxybenzoyl-CoA. Also shows high activity with protocatechuate and 4-hydroxybenzoate. Exhibits lower activity with benzoate, but cannot use 2-hydroxybenzoate or benzoate analogs containing other substituents at the ortho position, such as 2-aminobenzoate (anthranilate). In Aromatoleum sp. (strain CIB) (Azoarcus sp. (strain CIB)), this protein is 3-hydroxybenzoate--CoA ligase.